Here is a 189-residue protein sequence, read N- to C-terminus: UPF0312 protein VC0395_0473/VC395_A0785 (189 aa).

An N-terminal signal peptide occupies residues 1–22 (MKKTLMAVGLAAVISIPFAANA).

It belongs to the UPF0312 family. Type 1 subfamily.

The protein resides in the periplasm. This chain is UPF0312 protein VC0395_0473/VC395_A0785, found in Vibrio cholerae serotype O1 (strain ATCC 39541 / Classical Ogawa 395 / O395).